The primary structure comprises 487 residues: UDP-N-acetylmuramate--L-alanine ligase (487 aa).

126–132 is a binding site for ATP; it reads GTHGKTT.

It belongs to the MurCDEF family.

It localises to the cytoplasm. The catalysed reaction is UDP-N-acetyl-alpha-D-muramate + L-alanine + ATP = UDP-N-acetyl-alpha-D-muramoyl-L-alanine + ADP + phosphate + H(+). It functions in the pathway cell wall biogenesis; peptidoglycan biosynthesis. Cell wall formation. The chain is UDP-N-acetylmuramate--L-alanine ligase from Psychromonas ingrahamii (strain DSM 17664 / CCUG 51855 / 37).